A 374-amino-acid polypeptide reads, in one-letter code: Organelle RRM domain-containing protein 1, chloroplastic (374 aa).

The N-terminal 54 residues, 1–54 (MEALIASTSFFVPISNSSSSHIINNRFFPSFYSPNLNFGTFRKTSLSSSHLVFS), are a transit peptide targeting the chloroplast. Residues 258 to 271 (KDYEGDSTQDSRDQ) show a composition bias toward basic and acidic residues. The tract at residues 258 to 279 (KDYEGDSTQDSRDQDDSESPPV) is disordered. One can recognise an RRM domain in the interval 282–360 (KKLFITGLSF…WMIVVDVAKT (79 aa)).

As to quaternary structure, interacts with PCMP-H51/CRR28 and PCMP-H12/OTP82. Interacts with MORF8/RIP1, MORF2/RIP2 and VAR3/OZ1.

The protein localises to the plastid. It is found in the chloroplast. Functionally, involved in C-to-U editing of chloroplastic RNA. Functions as major chloroplastic editing factor. Controls 62 percent of the chloroplastic editing sites. Binds RNA close to ORRM1-dependent editing sites in vitro. Binds the editing recognition trans-factors PCMP-H51/CRR28 and PCMP-H12/OTP82. The chain is Organelle RRM domain-containing protein 1, chloroplastic from Arabidopsis thaliana (Mouse-ear cress).